Consider the following 362-residue polypeptide: MSQVYNFSAGPAMLPAEVLRRAELELCNWHGLGRSVMEISHRSKEFLEVAHQAEQDLRDLLNVPENYKILFCHGGARGHFAALPLNLLGEKTTADYIDGGYWAKSAADEAEKYCSPNIIKIKTEIDGKIAVKPMKEWQLSDNAAYVHYCPNETIDGIAIHEEPDFDDKKIVIADYSSAILSQPLDVSRFGMIYAGAQKNIGPAGLTLVIIREDLLGKARKETPSVFDYTVLAENDSMFNTPPTFAWYLSGMVFKWLKEQGGLQEIAKRNYEKATLLYSAIDNSDFYINRIATENRSLMNVPFQMSSPALDAVFLKEAEEQGLVALKGHRVSGGMRASIYNAMPFAGVQALVDFMADFERRHA.

Residue Arg42 coordinates L-glutamate. Pyridoxal 5'-phosphate is bound by residues 76–77 (AR), Trp102, Thr153, Asp174, and Gln197. At Lys198 the chain carries N6-(pyridoxal phosphate)lysine. A pyridoxal 5'-phosphate-binding site is contributed by 239 to 240 (NT).

It belongs to the class-V pyridoxal-phosphate-dependent aminotransferase family. SerC subfamily. As to quaternary structure, homodimer. It depends on pyridoxal 5'-phosphate as a cofactor.

The protein localises to the cytoplasm. The enzyme catalyses O-phospho-L-serine + 2-oxoglutarate = 3-phosphooxypyruvate + L-glutamate. It carries out the reaction 4-(phosphooxy)-L-threonine + 2-oxoglutarate = (R)-3-hydroxy-2-oxo-4-phosphooxybutanoate + L-glutamate. Its pathway is amino-acid biosynthesis; L-serine biosynthesis; L-serine from 3-phospho-D-glycerate: step 2/3. The protein operates within cofactor biosynthesis; pyridoxine 5'-phosphate biosynthesis; pyridoxine 5'-phosphate from D-erythrose 4-phosphate: step 3/5. In terms of biological role, catalyzes the reversible conversion of 3-phosphohydroxypyruvate to phosphoserine and of 3-hydroxy-2-oxo-4-phosphonooxybutanoate to phosphohydroxythreonine. The chain is Phosphoserine aminotransferase from Proteus mirabilis (strain HI4320).